A 368-amino-acid polypeptide reads, in one-letter code: Carbamoyl phosphate synthase small chain (368 aa).

Positions 1–178 (MKAVLGLEDG…GAECAWKGSG (178 aa)) are CPSase. 3 residues coordinate L-glutamine: Ser45, Gly230, and Gly232. Residues 182–368 (HAVVVDLGIK…KVVKVLGGDL (187 aa)) form the Glutamine amidotransferase type-1 domain. Catalysis depends on Cys257, which acts as the Nucleophile. Residues Phe258, Gln261, Asn299, Gly301, and Tyr302 each coordinate L-glutamine. Active-site residues include His342 and Glu344.

This sequence belongs to the CarA family. Composed of two chains; the small (or glutamine) chain promotes the hydrolysis of glutamine to ammonia, which is used by the large (or ammonia) chain to synthesize carbamoyl phosphate. Tetramer of heterodimers (alpha,beta)4.

The enzyme catalyses hydrogencarbonate + L-glutamine + 2 ATP + H2O = carbamoyl phosphate + L-glutamate + 2 ADP + phosphate + 2 H(+). It carries out the reaction L-glutamine + H2O = L-glutamate + NH4(+). Its pathway is amino-acid biosynthesis; L-arginine biosynthesis; carbamoyl phosphate from bicarbonate: step 1/1. It participates in pyrimidine metabolism; UMP biosynthesis via de novo pathway; (S)-dihydroorotate from bicarbonate: step 1/3. Its function is as follows. Small subunit of the glutamine-dependent carbamoyl phosphate synthetase (CPSase). CPSase catalyzes the formation of carbamoyl phosphate from the ammonia moiety of glutamine, carbonate, and phosphate donated by ATP, constituting the first step of 2 biosynthetic pathways, one leading to arginine and/or urea and the other to pyrimidine nucleotides. The small subunit (glutamine amidotransferase) binds and cleaves glutamine to supply the large subunit with the substrate ammonia. This is Carbamoyl phosphate synthase small chain from Methanosarcina acetivorans (strain ATCC 35395 / DSM 2834 / JCM 12185 / C2A).